The sequence spans 353 residues: UPF0283 membrane protein YcjF (353 aa).

Over residues 1–19 the composition is skewed to basic and acidic residues; sequence MSEPLKPRIDFAEPLKEEP. The disordered stretch occupies residues 1-48; the sequence is MSEPLKPRIDFAEPLKEEPTSAFKAQQTFSEAESHTFAPAAIDERPED. Residues 1–69 lie on the Periplasmic side of the membrane; sequence MSEPLKPRID…LRPKRSLWRK (69 aa). A helical transmembrane segment spans residues 70–90; the sequence is MVMGGLALFGASVVGQGVQWT. Over 91-99 the chain is Cytoplasmic; sequence MNAWQTQDW. A helical transmembrane segment spans residues 100-120; that stretch reads VALGGCAAGALIVGAGVGSVV. Over 121–212 the chain is Periplasmic; that stretch reads TEWWRLWRLR…ARREISRFAA (92 aa). Residues 213–233 traverse the membrane as a helical segment; that stretch reads ESTLMIAVSPLALVDMAFIAW. The Cytoplasmic portion of the chain corresponds to 234 to 353; the sequence is RNLRLINRIA…LQKSKSSPEK (120 aa).

This sequence belongs to the UPF0283 family.

It is found in the cell inner membrane. The chain is UPF0283 membrane protein YcjF (ycjF) from Salmonella typhi.